The primary structure comprises 1131 residues: MNASPHSKPSAALAPSPTAAFFPSTSRVYTSKAATVVDDDEALDEIRRYESFSTVDWVVDNTRERNRLARERQAASAHFVSSSSNAHLGNADAAWGHIGFGRGGVPPRWWSRGPWGRRAWLVWGIVKSASSAFTDSGVIVLVGILIGLNMGVISLATEWASDLKQGYCSSGWWLNQKFCCWEMMDQAGPGGAPLPAAAKALATATVTVTASIGAAAAATDSAPILPATPAATPTAAIRAVAQEAYNLTIRAIPDHQLWSRSAQDVIQDGFGTGLRLLSRAEGAASGAGDLSETCTDWVRWSKWSFPAWIIYMLFAGLLSFICAHLVKSFAPYAAGSGISEIKCILAGFVINGYLGFWTLAIKSLTLPLAIASGLSVGKEGPAVHVACCIGNVVASFFRSFNRSQAKMRELLTASSAAGVAVAFGSPIGGVLFSLEEMAYNFPASTMWRSFLCALAATVTLSFMNPFRTGKLVLFQVSYDRDWHYFEIMFYILIGIFGGLYGAFVIKYNLQVQSFRRSYLVKHGVSEVVVLATLTAFVGYANKFLRIDMTESLEILFRECEGGGDYDNLCQSWAQWRMVNSLLLATVLRTALVIVSYGCKVPAGIFVPSMAIGATFGRMVGILVKALYNAFPHWSLFSACQPDVPCITPGTYAFLGAAAALAGVTRITVAVVVIMFELTGALTYILPTMIVVGITKGVADWFSRGGIAEQMIKFSGYPFLDKDDHNFGIPVADVMRVCPQVLFASGMKLSELEGKLADGSYKGFPLVLAKHDATLLGYVGKVELRYAIGKARRARALDGDTLCLFSVGPNALDRADGVESSAHGAQQQQPDLLSVASLPTTAAADRAVREDMLSRFSGATGAGSASGLGSTSATGVASQRRHESESLIGQLDVEDDRSSAPSYRSRVDAGDNMSSSSDDDAVVGNAGGGVDGESDLDKLELGGWIDPTPLIVQPGMPLETVMDMFKNLGPRVILVVEYGRLSGLVTVKDVLKRIAMQEKAEAAARTAAAAGLPMSGSANSFTGEGAGAGGGELEALLKEAYEWAQEKWALISPRIERISARRASASRGGAPGSQAGQARYSHLRESTEDRYDDSDAVAEDMPMHSTRQTSATKNTRSEHHQFVLGAQDDDDE.

Transmembrane regions (helical) follow at residues 137–157 (GVIV…SLAT), 206–226 (VTVT…PILP), 305–325 (FPAW…CAHL), 341–361 (IKCI…TLAI), 380–397 (GPAV…ASFF), 414–434 (SSAA…LFSL), 485–505 (FEIM…AFVI), 518–538 (YLVK…AFVG), 577–597 (MVNS…VSYG), 603–623 (GIFV…GILV), 643–663 (VPCI…LAGV), and 680–702 (ALTY…DWFS). Disordered stretches follow at residues 815 to 835 (DGVE…LSVA) and 858 to 928 (ATGA…AGGG). Residues 866–877 (GLGSTSATGVAS) show a composition bias toward low complexity. A CBS domain is found at 944–1000 (IDPTPLIVQPGMPLETVMDMFKNLGPRVILVVEYGRLSGLVTVKDVLKRIAMQEKAE). Low complexity predominate over residues 1061–1078 (RASASRGGAPGSQAGQAR). Residues 1061-1131 (RASASRGGAP…VLGAQDDDDE (71 aa)) are disordered. Over residues 1104-1113 (STRQTSATKN) the composition is skewed to polar residues.

This sequence belongs to the chloride channel (TC 2.A.49) family.

Its subcellular location is the membrane. Functionally, voltage-gated chloride channel. The chain is Probable chloride channel protein UM03490-D from Mycosarcoma maydis (Corn smut fungus).